A 382-amino-acid chain; its full sequence is D-galactonate dehydratase (382 aa).

Asp183 contacts Mg(2+). His185 serves as the catalytic Proton donor. Residues Glu209 and Glu235 each contribute to the Mg(2+) site. His285 serves as the catalytic Proton acceptor.

This sequence belongs to the mandelate racemase/muconate lactonizing enzyme family. GalD subfamily. Mg(2+) serves as cofactor.

It carries out the reaction D-galactonate = 2-dehydro-3-deoxy-D-galactonate + H2O. It participates in carbohydrate acid metabolism; D-galactonate degradation; D-glyceraldehyde 3-phosphate and pyruvate from D-galactonate: step 1/3. Its function is as follows. Catalyzes the dehydration of D-galactonate to 2-keto-3-deoxy-D-galactonate. This Klebsiella pneumoniae subsp. pneumoniae (strain ATCC 700721 / MGH 78578) protein is D-galactonate dehydratase.